Consider the following 218-residue polypeptide: Large ribosomal subunit protein uL3 (218 aa).

It belongs to the universal ribosomal protein uL3 family. As to quaternary structure, part of the 50S ribosomal subunit. Forms a cluster with proteins L14 and L19.

Its function is as follows. One of the primary rRNA binding proteins, it binds directly near the 3'-end of the 23S rRNA, where it nucleates assembly of the 50S subunit. In Corynebacterium jeikeium (strain K411), this protein is Large ribosomal subunit protein uL3.